Here is a 757-residue protein sequence, read N- to C-terminus: Cellulose synthase-like protein B5 (757 aa).

2 consecutive transmembrane segments (helical) span residues 24 to 44 (AVDL…ILHI) and 50 to 70 (VWLL…IFTC). Catalysis depends on residues D136 and D460. A run of 6 helical transmembrane segments spans residues 531–551 (LAYF…YCLL), 572–592 (IVTL…SLGF), 613–633 (LFSI…GFVI), 671–691 (LFIP…GYLV), 704–724 (GSGL…LPFL), and 735–755 (IPLS…FFCV).

This sequence belongs to the glycosyltransferase 2 family. Plant cellulose synthase-like B subfamily. As to expression, expressed in young seedlings, primarily in the vascular tissue. Expressed in the root cap.

It localises to the golgi apparatus membrane. Its function is as follows. Thought to be a Golgi-localized beta-glycan synthase that polymerize the backbones of noncellulosic polysaccharides (hemicelluloses) of plant cell wall. The chain is Cellulose synthase-like protein B5 (CSLB5) from Arabidopsis thaliana (Mouse-ear cress).